A 390-amino-acid chain; its full sequence is uncharacterized protein (390 aa).

This is an uncharacterized protein from Archaeoglobus fulgidus (strain ATCC 49558 / DSM 4304 / JCM 9628 / NBRC 100126 / VC-16).